Reading from the N-terminus, the 98-residue chain is Large ribosomal subunit protein uL23 (98 aa).

Belongs to the universal ribosomal protein uL23 family. In terms of assembly, part of the 50S ribosomal subunit. Contacts protein L29, and trigger factor when it is bound to the ribosome.

In terms of biological role, one of the early assembly proteins it binds 23S rRNA. One of the proteins that surrounds the polypeptide exit tunnel on the outside of the ribosome. Forms the main docking site for trigger factor binding to the ribosome. The protein is Large ribosomal subunit protein uL23 of Lactobacillus gasseri (strain ATCC 33323 / DSM 20243 / BCRC 14619 / CIP 102991 / JCM 1131 / KCTC 3163 / NCIMB 11718 / NCTC 13722 / AM63).